Consider the following 369-residue polypeptide: DNA replication and repair protein RecF (369 aa).

ATP is bound at residue 30 to 37; it reads GDNGSGKT.

This sequence belongs to the RecF family.

The protein localises to the cytoplasm. In terms of biological role, the RecF protein is involved in DNA metabolism; it is required for DNA replication and normal SOS inducibility. RecF binds preferentially to single-stranded, linear DNA. It also seems to bind ATP. This is DNA replication and repair protein RecF from Pseudomonas aeruginosa (strain LESB58).